Reading from the N-terminus, the 349-residue chain is tRNA pseudouridine synthase D (349 aa).

Position 27 (F27) interacts with substrate. D80 acts as the Nucleophile in catalysis. A substrate-binding site is contributed by N129. Positions 155–303 (GVPNYFGAQR…VEAARRAMLL (149 aa)) constitute a TRUD domain. F329 provides a ligand contact to substrate.

Belongs to the pseudouridine synthase TruD family.

The enzyme catalyses uridine(13) in tRNA = pseudouridine(13) in tRNA. In terms of biological role, responsible for synthesis of pseudouridine from uracil-13 in transfer RNAs. This Escherichia coli (strain 55989 / EAEC) protein is tRNA pseudouridine synthase D.